A 1315-amino-acid chain; its full sequence is Tetratricopeptide repeat protein 21B (1315 aa).

TPR repeat units follow at residues 108 to 141 (RKAL…PHDS), 145 to 178 (PILK…GNDI), 192 to 225 (QNYS…QLAL), 285 to 323 (AQLF…TPQQ), 324 to 357 (AEIA…NESN), 492 to 525 (PQAV…SPSY), 563 to 596 (PLYH…PGMR), 616 to 649 (LSIF…FSGT), 721 to 754 (PRSF…NPKD), 756 to 788 (TLAR…GQQN), 790 to 821 (LCYD…EPVS), 830 to 863 (GRSQ…QARI), 883 to 916 (AEIC…CETD), 918 to 950 (KIML…DQDN), 951 to 984 (EPAT…KPDN), 1022 to 1055 (PGFQ…SDWG), 1196 to 1229 (EKSW…NRSC), 1231 to 1263 (KAYE…SNQT), and 1265 to 1298 (PAVG…HPTY).

Belongs to the TTC21 family. In terms of assembly, component of the IFT complex A (IFT-A) complex. IFT-A complex is divided into a core subcomplex composed of IFT122:IFT140:WDR19 which is associated with TULP3 and a peripheral subcomplex composed of IFT43:WDR35:TTC21B. Interacts directy with WDR35 and TTC21B. Interacts with TTC25.

Its subcellular location is the cytoplasm. It localises to the cytoskeleton. It is found in the cilium axoneme. Component of the IFT complex A (IFT-A), a complex required for retrograde ciliary transport and entry into cilia of G protein-coupled receptors (GPCRs). Essential for retrograde trafficking of IFT-1, IFT-B and GPCRs. Negatively modulates the SHH signal transduction. The protein is Tetratricopeptide repeat protein 21B (Ttc21b) of Mus musculus (Mouse).